The following is an 82-amino-acid chain: Translational regulator CsrA (82 aa).

It belongs to the CsrA/RsmA family. As to quaternary structure, homodimer; the beta-strands of each monomer intercalate to form a hydrophobic core while the alpha-helices form wings that extend away from the core. Each of the alpha-helical wings interacts with an FliW monomer, yielding a FliW-CsrA(2)-FliW complex.

Its subcellular location is the cytoplasm. Functionally, a translational regulator that binds mRNA to regulate translation initiation and/or mRNA stability. Usually binds in the 5'-UTR at or near the Shine-Dalgarno sequence preventing ribosome-binding, thus repressing translation. Its main target seems to be the major flagellin gene, while its function is anatagonized by FliW. In Geobacillus thermodenitrificans (strain NG80-2), this protein is Translational regulator CsrA.